A 341-amino-acid polypeptide reads, in one-letter code: Retinol dehydrogenase 10-B (341 aa).

A helical; Signal-anchor membrane pass occupies residues 3–23; sequence IVLEFFLVTFRVLWAFVLAAA. 40–64 lines the NADP(+) pocket; it reads LITGAGSGLGRLFALEFARRRAQLV. Ser197 is a substrate binding site. Tyr210 serves as the catalytic Proton acceptor.

The protein belongs to the short-chain dehydrogenases/reductases (SDR) family.

It localises to the microsome membrane. The protein resides in the endoplasmic reticulum membrane. It carries out the reaction all-trans-retinol + NADP(+) = all-trans-retinal + NADPH + H(+). Its pathway is cofactor metabolism; retinol metabolism. Retinol dehydrogenase with a clear preference for NADP. Converts all-trans-retinol to all-trans-retinal. Has no detectable activity towards 11-cis-retinol, 9-cis-retinol and 13-cis-retinol. This chain is Retinol dehydrogenase 10-B (rdh10-b), found in Xenopus laevis (African clawed frog).